Consider the following 178-residue polypeptide: uncharacterized protein (178 aa).

This sequence to E.coli YrdD.

This is an uncharacterized protein from Haemophilus influenzae (strain ATCC 51907 / DSM 11121 / KW20 / Rd).